Here is a 126-residue protein sequence, read N- to C-terminus: S-adenosylmethionine decarboxylase proenzyme (126 aa).

The active-site Schiff-base intermediate with substrate; via pyruvic acid is the Ser-63. A Pyruvic acid (Ser); by autocatalysis modification is found at Ser-63. His-68 functions as the Proton acceptor; for processing activity in the catalytic mechanism. Residue Cys-83 is the Proton donor; for catalytic activity of the active site.

This sequence belongs to the prokaryotic AdoMetDC family. Type 1 subfamily. Heterotetramer of two alpha and two beta chains arranged as a dimer of alpha/beta heterodimers. It depends on pyruvate as a cofactor. In terms of processing, is synthesized initially as an inactive proenzyme. Formation of the active enzyme involves a self-maturation process in which the active site pyruvoyl group is generated from an internal serine residue via an autocatalytic post-translational modification. Two non-identical subunits are generated from the proenzyme in this reaction, and the pyruvate is formed at the N-terminus of the alpha chain, which is derived from the carboxyl end of the proenzyme. The post-translation cleavage follows an unusual pathway, termed non-hydrolytic serinolysis, in which the side chain hydroxyl group of the serine supplies its oxygen atom to form the C-terminus of the beta chain, while the remainder of the serine residue undergoes an oxidative deamination to produce ammonia and the pyruvoyl group blocking the N-terminus of the alpha chain.

It carries out the reaction S-adenosyl-L-methionine + H(+) = S-adenosyl 3-(methylsulfanyl)propylamine + CO2. Its pathway is amine and polyamine biosynthesis; S-adenosylmethioninamine biosynthesis; S-adenosylmethioninamine from S-adenosyl-L-methionine: step 1/1. Its function is as follows. Catalyzes the decarboxylation of S-adenosylmethionine to S-adenosylmethioninamine (dcAdoMet), the propylamine donor required for the synthesis of the polyamines spermine and spermidine from the diamine putrescine. This is S-adenosylmethionine decarboxylase proenzyme from Syntrophomonas wolfei subsp. wolfei (strain DSM 2245B / Goettingen).